Reading from the N-terminus, the 552-residue chain is Probable bifunctional methylthioribose-1-phosphate isomerase/methylthioribulose-1-phosphate dehydratase (552 aa).

The interval 1–333 (MRPIDDSSLT…VVTEHGVVHG (333 aa)) is methylthioribose-1-phosphate isomerase activity. Substrate-binding positions include 49 to 51 (RGA), Arg-91, and Gln-195. Asp-236 (proton donor) is an active-site residue. Substrate is bound at residue 246-247 (NK). A methylthioribulose-1-phosphate dehydratase activity region spans residues 334 to 535 (TVAAEPGARI…AVCELVLRTG (202 aa)). 2 residues coordinate Zn(2+): His-427 and His-429.

The protein in the N-terminal section; belongs to the eIF-2B alpha/beta/delta subunits family. MtnA subfamily. In the C-terminal section; belongs to the aldolase class II family. MtnB subfamily. Requires Zn(2+) as cofactor.

The enzyme catalyses 5-(methylsulfanyl)-alpha-D-ribose 1-phosphate = 5-(methylsulfanyl)-D-ribulose 1-phosphate. It carries out the reaction 5-(methylsulfanyl)-D-ribulose 1-phosphate = 5-methylsulfanyl-2,3-dioxopentyl phosphate + H2O. The protein operates within amino-acid biosynthesis; L-methionine biosynthesis via salvage pathway; L-methionine from S-methyl-5-thio-alpha-D-ribose 1-phosphate: step 1/6. Its pathway is amino-acid biosynthesis; L-methionine biosynthesis via salvage pathway; L-methionine from S-methyl-5-thio-alpha-D-ribose 1-phosphate: step 2/6. Bifunctional protein that catalyzes the interconversion of methylthioribose-1-phosphate (MTR-1-P) into methylthioribulose-1-phosphate (MTRu-1-P), and the dehydration of methylthioribulose-1-phosphate (MTRu-1-P) into 2,3-diketo-5-methylthiopentyl-1-phosphate (DK-MTP-1-P). The protein is Probable bifunctional methylthioribose-1-phosphate isomerase/methylthioribulose-1-phosphate dehydratase (mtnAB) of Nocardia farcinica (strain IFM 10152).